We begin with the raw amino-acid sequence, 754 residues long: ToMV resistance protein Tm-1(GCR237) (754 aa).

Positions 1 to 201 are N-terminal inhibitory domain NN; the sequence is MATAQSNSPR…AGMVIGRLES (201 aa). Residues 18 to 20, Thr-55, Arg-92, and 124 to 127 contribute to the ATP site; these read DTK and GSGG. The tract at residues 211-431 is N-terminal inhibitory domain NC; the sequence is KFTVGVTMFG…VDSFLEISPK (221 aa).

Belongs to the UPF0261 family. In terms of assembly, homodimer. (Microbial infection) Binds, via an ATP bridge, to the tobamoviruses avirulent (Avr) replication proteins (large and small subunits, e.g. tomato mosaic virus (ToMV/TMV) AC P03587, tobacco mild green mosaic virus (TMGMV) AC P18339 and pepper mild mottle virus (PMMoV) AC P89657) to inhibit their function after the translation of tobamoviruses RNA, but before the viral replication complex formation on the membrane surfaces; this interaction is not possible with resistance-breaking strains replication proteins.

Inhibitor of viral RNA replication which confers resistance to some tobamoviruses including tomato mosaic virus (ToMV) (e.g. isolate L), tobacco mosaic virus (TMV), tobacco mild green mosaic virus (TMGMV) and pepper mild mottle virus (PMMoV), but not to resistance-breaking isolates of ToMV (e.g. LT1, SL-1 and ToMV1-2) and tomato brown rugose fruit virus (ToBRFV). Prevents tobamoviruses RNA replication by affecting the association of tobamoviruses replication proteins (large and small subunits) with host membrane-associated proteins (e.g. TOM1, TOM2A and ARL8), thus inhibiting the replication complex formation on the membranes and avoiding viral negative-strand RNA synthesis. Inhibits triphosphatase activity of ToMV replication proteins. The chain is ToMV resistance protein Tm-1(GCR237) from Solanum lycopersicum (Tomato).